We begin with the raw amino-acid sequence, 217 residues long: MEKHTLEALVRSVVGKKRAVRRLRRQGFVPGVVYGPDVEPLSISIKRSNLIKLFHEVTEASIISLTVKDENGKEVFSHDVFIKNVQYDKLTDEVKHVDFYAPEKGHKMKINLPLEFVGKAKGEEKGGVLEIHHHELPVETLPNAVVEKLEIDVSNLDLGQALYVKDLKLPEGMEAELDEEEIIAIVSTPSGLEVEEETGEEESAEPEVIEKGKKEEE.

The tract at residues 187–217 is disordered; it reads STPSGLEVEEETGEEESAEPEVIEKGKKEEE. The span at 193–207 shows a compositional bias: acidic residues; it reads EVEEETGEEESAEPE. Residues 208-217 are compositionally biased toward basic and acidic residues; it reads VIEKGKKEEE.

It belongs to the bacterial ribosomal protein bL25 family. CTC subfamily. Part of the 50S ribosomal subunit; part of the 5S rRNA/L5/L18/L25 subcomplex. Contacts the 5S rRNA. Binds to the 5S rRNA independently of L5 and L18.

This is one of the proteins that binds to the 5S RNA in the ribosome where it forms part of the central protuberance. This is Large ribosomal subunit protein bL25 from Thermosipho africanus (strain TCF52B).